Reading from the N-terminus, the 260-residue chain is MSDILDRIVARKHEEVAQLRRDGISLPEEFAEKRPAPPRGFRQSLLSHQGLSIIAEAKKASPSKGLICEDFDPVAIAKNYERCGVQAISVLTDRDFFQGDLRYLLQVREAVGLPVLRKDFIIDELQLKEASLYGADAILLIAAILDEAQLRDYRCYAEELGMDSLVEVHDEEETEKALASGCNLLGVNNRNLKDFSVDVETTFRIRKMVPIEIPLVSESGLKEAADLRRLAEAGVCAALIGETLMRMGSAGDVLAELWRP.

It belongs to the TrpC family.

The catalysed reaction is 1-(2-carboxyphenylamino)-1-deoxy-D-ribulose 5-phosphate + H(+) = (1S,2R)-1-C-(indol-3-yl)glycerol 3-phosphate + CO2 + H2O. Its pathway is amino-acid biosynthesis; L-tryptophan biosynthesis; L-tryptophan from chorismate: step 4/5. The chain is Indole-3-glycerol phosphate synthase from Desulfotalea psychrophila (strain LSv54 / DSM 12343).